The following is a 713-amino-acid chain: Zinc finger and BTB domain-containing protein 1 (713 aa).

Residue Lys3 forms a Glycyl lysine isopeptide (Lys-Gly) (interchain with G-Cter in SUMO2) linkage. One can recognise a BTB domain in the interval 24 to 91 (CDCCIAIDDI…MYLGKIMTAP (68 aa)). Glycyl lysine isopeptide (Lys-Gly) (interchain with G-Cter in SUMO2) cross-links involve residues Lys200 and Lys205. Residues 216 to 242 (FTCDSCGFGFSCEKLLDEHVLTCTNRH) form a C2H2-type 1; atypical zinc finger. Residues Lys261, Lys266, Lys276, Lys284, Lys304, Lys316, Lys328, Lys340, and Lys346 each participate in a glycyl lysine isopeptide (Lys-Gly) (interchain with G-Cter in SUMO2) cross-link. Residues 270–319 (AEKDSSKTFSAQPDKYREDANQAPDDSASTTGSRKSTVEAGIAGEEKSRA) are disordered. Ser355 is modified (phosphoserine). The residue at position 356 (Thr356) is a Phosphothreonine. A Glycyl lysine isopeptide (Lys-Gly) (interchain with G-Cter in SUMO2) cross-link involves residue Lys381. Residues 448-470 (CACGKCGQILVKGRQLQEHAQRC) form a C2H2-type 2; atypical zinc finger. Residue Lys528 forms a Glycyl lysine isopeptide (Lys-Gly) (interchain with G-Cter in SUMO2) linkage. The UBZ-type zinc-finger motif lies at 533–558 (PFRCPNCGQRFETENLVVEHMSSCLD). Lys563 is covalently cross-linked (Glycyl lysine isopeptide (Lys-Gly) (interchain with G-Cter in SUMO2)). 5 C2H2-type zinc fingers span residues 578–600 (HFCN…YTVH), 606–628 (FVCQ…NDMH), 634–656 (YVCS…MISH), 662–684 (TICQ…MDVH), and 686–709 (YTCG…NAKH).

Homodimer. Homodimer. Interacts (via BTB domain) with TRIM28 (unphosphorylated or phosphorylated form). Sumoylated with SUMO2 at Lys-328 and to a lesser extent at Lys-266. Sumoylation inhibits its transcriptional repression activity and regulates its subcellular localization. In terms of tissue distribution, expressed strongly in thymus and spleen, less in lymph nodes and peripheral blood mononuclear cells (PBMCs) and weakly in bone marrow. Strongly expressed in immature, but weakly in mature bone marrow-lymphocyte B.

It is found in the nucleus. It localises to the nucleoplasm. Acts as a transcriptional repressor. Represses cAMP-responsive element (CRE)-mediated transcriptional activation. In addition, has a role in translesion DNA synthesis. Requires for UV-inducible RAD18 loading, PCNA monoubiquitination, POLH recruitment to replication factories and efficient translesion DNA synthesis. Plays a key role in the transcriptional regulation of T lymphocyte development. This Mus musculus (Mouse) protein is Zinc finger and BTB domain-containing protein 1 (Zbtb1).